A 381-amino-acid polypeptide reads, in one-letter code: Layilin (381 aa).

An N-terminal signal peptide occupies residues 1–24 (MQPGAALQAMLLAVLLAKPRDSKG). Topologically, residues 25–235 (RLLSASDLDP…ERREAALNLA (211 aa)) are extracellular. Residues 45-185 (TRRPCYKVIY…CNMKNNFICK (141 aa)) form the C-type lectin domain. Intrachain disulfides connect C71–C184 and C150–C176. N117 is a glycosylation site (N-linked (GlcNAc...) asparagine). The helical transmembrane segment at 236-256 (YILIPSIPLFLLLVVTSAVCW) threads the bilayer. Residues 257-381 (VWICRRKREQ…SGWVENEIYY (125 aa)) are Cytoplasmic-facing. A phosphoserine mark is found at S286 and S299. The interval 330-374 (DYENIAVNPSESGFVTLASMESGFVTNDIYEFSPDRMGRSKESGW) is interaction with NF2. The interval 337 to 381 (NPSESGFVTLASMESGFVTNDIYEFSPDRMGRSKESGWVENEIYY) is interaction with TLN1. Repeat copies occupy residues 340–344 (ESGFV), 350–354 (ESGFV), 356–359 (NDIY), 371–375 (ESGWV), and 377–380 (NEIY). The 3 X 5 AA repeats of E-S-G-X-V stretch occupies residues 340–375 (ESGFVTLASMESGFVTNDIYEFSPDRMGRSKESGWV). Residues 356–380 (NDIYEFSPDRMGRSKESGWVENEIY) form a 2 X 4 AA repeats of N-X-I-Y region.

Interacts with TLN1. Interacts with NF2 and RDX.

The protein localises to the membrane. Its function is as follows. Receptor for hyaluronate. The protein is Layilin (Layn) of Mus musculus (Mouse).